Reading from the N-terminus, the 425-residue chain is SWI/SNF and RSC complexes subunit ssr3 (425 aa).

A compositionally biased stretch (polar residues) spans 1 to 16 (MSNNSRLPENGVQSGN). The interval 1 to 23 (MSNNSRLPENGVQSGNGEDAELK) is disordered. The 78-residue stretch at 201–278 (EHPERYKLSK…PELMNRFLEP (78 aa)) folds into the SWIB/MDM2 domain.

It belongs to the SMARCD family. As to quaternary structure, component of the RSC complex composed of at least arp9, arp42, rsc1, rsc4, rsc7, rsc9, rsc58, sfh1, snf21, ssr1, ssr2, ssr3 and ssr4. The complex interacts with histone and histone variant components of centromeric chromatin. Component of the SWI/SNF global transcription activator complex composed of at least arp9, arp42, snf5, snf22, snf30, sbf59, sol1, ssr1, ssr2, ssr3, ssr4 and tfg3.

Its subcellular location is the cytoplasm. The protein localises to the nucleus. Its function is as follows. Component of the chromatin structure remodeling complex (RSC), which is involved in transcription regulation and nucleosome positioning. Controls particularly membrane and organelle development genes. Part of the SWI/SNF complex, an ATP-dependent chromatin remodeling complex, required for the positive and negative regulation of gene expression of a large number of genes. It changes chromatin structure by altering DNA-histone contacts within a nucleosome, leading eventually to a change in nucleosome position, thus facilitating or repressing binding of gene-specific transcription factors. The sequence is that of SWI/SNF and RSC complexes subunit ssr3 (ssr3) from Schizosaccharomyces pombe (strain 972 / ATCC 24843) (Fission yeast).